A 270-amino-acid polypeptide reads, in one-letter code: Energy-coupling factor transporter transmembrane protein EcfT (270 aa).

The next 4 membrane-spanning stretches (helical) occupy residues 36-56 (LFIV…LISI), 72-92 (PIFI…GGAN), 108-128 (LIMA…TSLL), and 248-268 (FIAS…RIWW).

The protein belongs to the energy-coupling factor EcfT family. Forms a stable energy-coupling factor (ECF) transporter complex composed of 2 membrane-embedded substrate-binding proteins (S component), 2 ATP-binding proteins (A component) and 2 transmembrane proteins (T component). May be able to interact with more than 1 S component at a time.

The protein localises to the cell membrane. Functionally, transmembrane (T) component of an energy-coupling factor (ECF) ABC-transporter complex. Unlike classic ABC transporters this ECF transporter provides the energy necessary to transport a number of different substrates. This is Energy-coupling factor transporter transmembrane protein EcfT from Clostridium kluyveri (strain ATCC 8527 / DSM 555 / NBRC 12016 / NCIMB 10680 / K1).